Here is a 362-residue protein sequence, read N- to C-terminus: Tyrosine-protein kinase SRK2 (362 aa).

In terms of domain architecture, SH2 spans 1–70 (TFLVRESESK…GLCVNLRQPC (70 aa)). Positions 95–348 (ITLIRKLGAG…ALQWRLEDFF (254 aa)) constitute a Protein kinase domain. ATP-binding positions include 101-109 (LGAGQFGEV) and Lys-123. Residue Asp-214 is the Proton acceptor of the active site.

It belongs to the protein kinase superfamily. Tyr protein kinase family.

The protein resides in the cytoplasm. It catalyses the reaction L-tyrosyl-[protein] + ATP = O-phospho-L-tyrosyl-[protein] + ADP + H(+). This is Tyrosine-protein kinase SRK2 (SRK2) from Spongilla lacustris (Freshwater sponge).